The sequence spans 617 residues: Chaperone protein HscA homolog (617 aa).

Residues 1–23 (MALLQIAEPGQSSAPHEHKRAAG) form a disordered region.

This sequence belongs to the heat shock protein 70 family.

In terms of biological role, chaperone involved in the maturation of iron-sulfur cluster-containing proteins. Has a low intrinsic ATPase activity which is markedly stimulated by HscB. In Vibrio vulnificus (strain YJ016), this protein is Chaperone protein HscA homolog.